The sequence spans 269 residues: Aminoglycoside (3'') (9) adenylyltransferase (269 aa).

It catalyses the reaction streptomycin + ATP = 3''-O-adenylylstreptomycin + diphosphate. It carries out the reaction spectinomycin + ATP = 9-O-adenylylspectinomycin + diphosphate. Mediates bacterial resistance to the antibiotic spectinomycin and probably also to streptomycin. The protein is Aminoglycoside (3'') (9) adenylyltransferase of Rhizobium radiobacter (Agrobacterium tumefaciens).